Here is a 204-residue protein sequence, read N- to C-terminus: Holliday junction branch migration complex subunit RuvA (204 aa).

A domain I region spans residues 1–64 (MIGRLQGILL…EDAHLLFGFA (64 aa)). Residues 65–143 (QKTDRTLFRE…GVKQSDFFVE (79 aa)) form a domain II region. The segment at 144 to 155 (STHIPLSPSIES) is flexible linker. The segment at 156-204 (HSESSSDEAISALIALGYKPAEAEKMVKRVAKPELTSEQVIREALKAAL) is domain III.

The protein belongs to the RuvA family. As to quaternary structure, homotetramer. Forms an RuvA(8)-RuvB(12)-Holliday junction (HJ) complex. HJ DNA is sandwiched between 2 RuvA tetramers; dsDNA enters through RuvA and exits via RuvB. An RuvB hexamer assembles on each DNA strand where it exits the tetramer. Each RuvB hexamer is contacted by two RuvA subunits (via domain III) on 2 adjacent RuvB subunits; this complex drives branch migration. In the full resolvosome a probable DNA-RuvA(4)-RuvB(12)-RuvC(2) complex forms which resolves the HJ.

Its subcellular location is the cytoplasm. In terms of biological role, the RuvA-RuvB-RuvC complex processes Holliday junction (HJ) DNA during genetic recombination and DNA repair, while the RuvA-RuvB complex plays an important role in the rescue of blocked DNA replication forks via replication fork reversal (RFR). RuvA specifically binds to HJ cruciform DNA, conferring on it an open structure. The RuvB hexamer acts as an ATP-dependent pump, pulling dsDNA into and through the RuvAB complex. HJ branch migration allows RuvC to scan DNA until it finds its consensus sequence, where it cleaves and resolves the cruciform DNA. This is Holliday junction branch migration complex subunit RuvA from Haemophilus influenzae (strain PittGG).